A 294-amino-acid chain; its full sequence is Small ribosomal subunit protein uS2 (294 aa).

The tract at residues Arg232–Lys294 is disordered. The span at Glu246–Glu259 shows a compositional bias: basic and acidic residues. The span at Ala260–Lys294 shows a compositional bias: low complexity.

This sequence belongs to the universal ribosomal protein uS2 family.

The polypeptide is Small ribosomal subunit protein uS2 (Arthrobacter sp. (strain FB24)).